Here is a 287-residue protein sequence, read N- to C-terminus: Probable F-box protein At5g04010 (287 aa).

One can recognise an F-box; degenerate domain in the interval 50 to 101 (PSPPSWEILCLVGPYMDPESLAVASCVSTTWSKCFSSEDLWKSLPATRHSIF).

This chain is Probable F-box protein At5g04010 (NSFBx), found in Arabidopsis thaliana (Mouse-ear cress).